A 554-amino-acid chain; its full sequence is Suppressor of hairless homolog (554 aa).

The disordered stretch occupies residues 1–31 (MYHPHHLPAHGQVQSHQHREDAAATSSRDVN). DNA-binding regions lie at residues 83 to 90 (KSYGNEKR), 218 to 227 (RLRSQTVSTR), and 291 to 323 (RKVD…ERMY). In terms of domain architecture, IPT/TIG spans 381 to 471 (PNVHSLQLNG…YPTNLTFTFT (91 aa)). Positions 489 to 554 (GSKRPSASMP…NGANMLRTAS (66 aa)) are disordered. A compositionally biased stretch (basic and acidic residues) spans 508–519 (DSGRGNESDRGD).

This sequence belongs to the Su(H) family. In terms of assembly, interacts with activated Notch proteins.

The protein resides in the nucleus. Its function is as follows. Transcriptional regulator that plays a central role in Notch signaling, a signaling pathway involved in cell-cell communication that regulates a broad spectrum of cell-fate determinations. Acts as a transcriptional repressor when it is not associated with Notch proteins. When associated with some Notch protein, it acts as a transcriptional activator that activates transcription of Notch target genes. Required for the transcriptional expression of Brachyury, suggesting that it participates in notochord differentiation. The chain is Suppressor of hairless homolog (Su(H)) from Ciona intestinalis (Transparent sea squirt).